The primary structure comprises 1032 residues: Integrin alpha-4 (1032 aa).

The signal sequence occupies residues 1–34 (MIRDLGKVGKVSLLLDHIWTGILLYTVILTPADC). At 35 to 974 (YNIDESSPML…LHNLKPKKHV (940 aa)) the chain is on the extracellular side. FG-GAP repeat units follow at residues 36–100 (NIDE…PNRT), 113–177 (KCGK…TELS), 186–237 (DHVR…TIKS), 238–291 (YVDL…EKQL), 292–351 (TILF…GAME), 353–411 (LKFE…GITP), and 415–477 (QRLQ…LPST). N-linked (GlcNAc...) asparagine glycosylation is found at Asn-81 and Asn-98. Disulfide bonds link Cys-91/Cys-101, Cys-144/Cys-165, and Cys-183/Cys-198. N-linked (GlcNAc...) asparagine glycosylation occurs at Asn-229. Ca(2+)-binding residues include Asp-314, Asn-316, Asp-318, Leu-320, Asp-322, Asp-376, Asp-378, Asp-380, Asp-384, Asp-438, Asp-440, Asn-442, Tyr-444, and Asp-446. Residue Asn-479 is glycosylated (N-linked (GlcNAc...) asparagine). A disulfide bond links Cys-485 and Cys-494. N-linked (GlcNAc...) asparagine glycosylation is found at Asn-496, Asn-517, Asn-537, Asn-626, and Asn-660. 2 disulfide bridges follow: Cys-500-Cys-556 and Cys-622-Cys-627. Cysteines 698 and 712 form a disulfide. N-linked (GlcNAc...) asparagine glycans are attached at residues Asn-746 and Asn-857. 2 disulfide bridges follow: Cys-853-Cys-889 and Cys-896-Cys-901. The chain crosses the membrane as a helical span at residues 975 to 998 (IYMIIGISLLLGILLFSLLTYILW). Residues 999–1032 (KVGFFRRKYQPIGTEETSRRESWNYLNKDEKEVK) are Cytoplasmic-facing. The GFFKR motif signature appears at 1001–1005 (GFFRR).

The protein belongs to the integrin alpha chain family. Heterodimer of an alpha and a beta subunit.

The protein resides in the membrane. In terms of biological role, fibronectin and V-CAM adhesion receptor. This is Integrin alpha-4 (itga4) from Xenopus laevis (African clawed frog).